Consider the following 805-residue polypeptide: MFAKLETYPAALLELVATANDAAKAIPPLFPLSSSVAVNPFLGQTEEPLAVTAARLARVGGTKIMPERAHWAAKLEAGDITETDLTEALAALKGRFNCPSLDDVKAALTVPSPTPQALPTVAELAADVSGLDWPALIEDRISAWAAGHFDEGQALWQQAKTGGTFSAWRDFAARDLTPEIQGLSGFCAFVAATNRSHWRAIGRASERLNLGTEAASTAFHRWLMTLGGWAQYGRYLLWQDELNGAQNSTVTELLAIRMVFDEALFALYEDQISARWAEVVAAHQTPVTPTPDLVIDAIWQDAAERAEQRRLAETLQSGAVQPVEGRAEVQAAFCIDVRSEVFRRALEAQDRQIETLGFAGFFGLASAHKAAGSDVVETRGPVLLQAGVSSQAKEAEELDLDRRYSARAKRAWGRFKLAAVSSFAFVEASGPLYAGELIRDSLLLGGKTKAEPAPALDPSISLATRIQMAKTVLTAMSLTSDFAKLVVLAGHGADVTNSPHESALQCGACGGHAGDVNARLLAALLNDRDVQKGLRDQGIEIPSDTVFLPALHHTTTDEVTLYEQDLSSYALQISEATRGKLKGWLTEAGRLARAERAQRLPRASSEASVHMRARDWAETRPEWGLAGCRAFVAAPRARTSGADLGGQAFLHNYVWQRDEGFGVLELILTAPVVVASWISLQYYGSTVAPAQFGGGNKLLHNVVGGIGVLEGNTGAPRAGLPWQSVHDGDKVQHDPLRLSVVIEAPREAMSEILSRHPGVRALFDNGWLHLIAMDDEGKLAWRYRGDLKWSRFDAPQSTPSALAAE.

Residues C334, D336, H491, and C506 each coordinate Zn(2+).

This sequence belongs to the inorganic carbon transporter (TC 9.A.2) DabA family. In terms of assembly, forms a complex with DabB. The cofactor is Zn(2+).

The protein resides in the cell inner membrane. Functionally, part of an energy-coupled inorganic carbon pump. In Ruegeria sp. (strain TM1040) (Silicibacter sp.), this protein is Probable inorganic carbon transporter subunit DabA.